Consider the following 226-residue polypeptide: tRNA (guanine-N(7)-)-methyltransferase (226 aa).

Residues Glu-59, Glu-84, Asp-111, and Asp-134 each contribute to the S-adenosyl-L-methionine site. Residue Asp-134 is part of the active site. Substrate is bound at residue Lys-138. An interaction with RNA region spans residues 140–145 (RHNKRR). Residues Asp-170 and 205 to 208 (TKFE) contribute to the substrate site.

The protein belongs to the class I-like SAM-binding methyltransferase superfamily. TrmB family.

It catalyses the reaction guanosine(46) in tRNA + S-adenosyl-L-methionine = N(7)-methylguanosine(46) in tRNA + S-adenosyl-L-homocysteine. Its pathway is tRNA modification; N(7)-methylguanine-tRNA biosynthesis. Its function is as follows. Catalyzes the formation of N(7)-methylguanine at position 46 (m7G46) in tRNA. This chain is tRNA (guanine-N(7)-)-methyltransferase, found in Chromobacterium violaceum (strain ATCC 12472 / DSM 30191 / JCM 1249 / CCUG 213 / NBRC 12614 / NCIMB 9131 / NCTC 9757 / MK).